The sequence spans 451 residues: Methylenetetrahydrofolate--tRNA-(uracil-5-)-methyltransferase TrmFO (451 aa).

Residue 10–15 (GGGLAG) participates in FAD binding.

Belongs to the MnmG family. TrmFO subfamily. It depends on FAD as a cofactor.

The protein localises to the cytoplasm. The catalysed reaction is uridine(54) in tRNA + (6R)-5,10-methylene-5,6,7,8-tetrahydrofolate + NADH + H(+) = 5-methyluridine(54) in tRNA + (6S)-5,6,7,8-tetrahydrofolate + NAD(+). It catalyses the reaction uridine(54) in tRNA + (6R)-5,10-methylene-5,6,7,8-tetrahydrofolate + NADPH + H(+) = 5-methyluridine(54) in tRNA + (6S)-5,6,7,8-tetrahydrofolate + NADP(+). Functionally, catalyzes the folate-dependent formation of 5-methyl-uridine at position 54 (M-5-U54) in all tRNAs. The polypeptide is Methylenetetrahydrofolate--tRNA-(uracil-5-)-methyltransferase TrmFO (Anaeromyxobacter sp. (strain Fw109-5)).